A 462-amino-acid polypeptide reads, in one-letter code: Integrator complex subunit 12 (462 aa).

The interval 39-132 is disordered; the sequence is LARGIDSSYR…PETRSSPITV (94 aa). Residues 59 to 86 are compositionally biased toward polar residues; that stretch reads ISSTKTVSVKQEPKTSSSLPSGNNNGKV. Lys-68 participates in a covalent cross-link: Glycyl lysine isopeptide (Lys-Gly) (interchain with G-Cter in SUMO2). A compositionally biased stretch (basic and acidic residues) spans 88-125; sequence TTEKVKKEGEKRPADKMKSDITEGADVPKKPRLEKPET. Phosphoserine is present on Ser-128. The PHD-type zinc finger occupies 159 to 215; sequence GLACVVCRQMTVASGNQLVECQECHNLYHQDCHKPQVTDKEVTDPRLVWYCARCTRQ. A Glycyl lysine isopeptide (Lys-Gly) (interchain with G-Cter in SUMO2) cross-link involves residue Lys-254. A compositionally biased stretch (polar residues) spans 305-328; it reads PSTAKLSSAAQNNSGKPATSSANQ. A disordered region spans residues 305-462; that stretch reads PSTAKLSSAA…KKAAQKKLKK (158 aa). Low complexity-rich tracts occupy residues 347-358 and 382-431; these read KIGSSNSTSPTV and VSKV…PSAS. Residues 434 to 443 show a composition bias toward polar residues; sequence GPTSQESQLN. Residues 449–462 show a composition bias toward basic residues; sequence QMVKKKAAQKKLKK.

This sequence belongs to the Integrator subunit 12 family. In terms of assembly, component of the Integrator complex, composed of core subunits INTS1, INTS2, INTS3, INTS4, INTS5, INTS6, INTS7, INTS8, INTS9/RC74, INTS10, INTS11/CPSF3L, INTS12, INTS13, INTS14 and INTS15. The core complex associates with protein phosphatase 2A subunits PPP2CA and PPP2R1A, to form the Integrator-PP2A (INTAC) complex. Dephosphorylated at Ser-128 by the PNUTS-PP1 complex, promoting RNA polymerase II transcription pause-release.

Its subcellular location is the nucleus. Component of the integrator complex, a multiprotein complex that terminates RNA polymerase II (Pol II) transcription in the promoter-proximal region of genes. The integrator complex provides a quality checkpoint during transcription elongation by driving premature transcription termination of transcripts that are unfavorably configured for transcriptional elongation: the complex terminates transcription by (1) catalyzing dephosphorylation of the C-terminal domain (CTD) of Pol II subunit POLR2A/RPB1 and SUPT5H/SPT5, (2) degrading the exiting nascent RNA transcript via endonuclease activity and (3) promoting the release of Pol II from bound DNA. The integrator complex is also involved in terminating the synthesis of non-coding Pol II transcripts, such as enhancer RNAs (eRNAs), small nuclear RNAs (snRNAs), telomerase RNAs and long non-coding RNAs (lncRNAs). Mediates recruitment of cytoplasmic dynein to the nuclear envelope, probably as component of the integrator complex. This chain is Integrator complex subunit 12 (INTS12), found in Bos taurus (Bovine).